A 204-amino-acid chain; its full sequence is Holliday junction branch migration complex subunit RuvA (204 aa).

A domain I region spans residues 1–64; the sequence is MIGRLQGKLI…EDAHLLFGFS (64 aa). The tract at residues 65-143 is domain II; it reads TKTDRTLFRE…GLRQPDFFVE (79 aa). The flexible linker stretch occupies residues 144–155; it reads SKHITVPDIVSA. Positions 156-204 are domain III; it reads EKETPNDEAVAALVALGYKPPEAAKMVKKVANGDLTSEQLIREALKAAL.

It belongs to the RuvA family. Homotetramer. Forms an RuvA(8)-RuvB(12)-Holliday junction (HJ) complex. HJ DNA is sandwiched between 2 RuvA tetramers; dsDNA enters through RuvA and exits via RuvB. An RuvB hexamer assembles on each DNA strand where it exits the tetramer. Each RuvB hexamer is contacted by two RuvA subunits (via domain III) on 2 adjacent RuvB subunits; this complex drives branch migration. In the full resolvosome a probable DNA-RuvA(4)-RuvB(12)-RuvC(2) complex forms which resolves the HJ.

Its subcellular location is the cytoplasm. Functionally, the RuvA-RuvB-RuvC complex processes Holliday junction (HJ) DNA during genetic recombination and DNA repair, while the RuvA-RuvB complex plays an important role in the rescue of blocked DNA replication forks via replication fork reversal (RFR). RuvA specifically binds to HJ cruciform DNA, conferring on it an open structure. The RuvB hexamer acts as an ATP-dependent pump, pulling dsDNA into and through the RuvAB complex. HJ branch migration allows RuvC to scan DNA until it finds its consensus sequence, where it cleaves and resolves the cruciform DNA. The chain is Holliday junction branch migration complex subunit RuvA from Actinobacillus succinogenes (strain ATCC 55618 / DSM 22257 / CCUG 43843 / 130Z).